The sequence spans 376 residues: N-acetyldiaminopimelate deacetylase (376 aa).

Asp69 is a catalytic residue. The active-site Proton acceptor is Glu127.

This sequence belongs to the peptidase M20A family. N-acetyldiaminopimelate deacetylase subfamily.

The enzyme catalyses N-acetyl-(2S,6S)-2,6-diaminopimelate + H2O = (2S,6S)-2,6-diaminopimelate + acetate. Its pathway is amino-acid biosynthesis; L-lysine biosynthesis via DAP pathway; LL-2,6-diaminopimelate from (S)-tetrahydrodipicolinate (acetylase route): step 3/3. In terms of biological role, catalyzes the conversion of N-acetyl-diaminopimelate to diaminopimelate and acetate. The sequence is that of N-acetyldiaminopimelate deacetylase from Lactococcus lactis subsp. cremoris (strain SK11).